A 357-amino-acid polypeptide reads, in one-letter code: Dihydroflavonol 4-reductase (357 aa).

Positions 49 and 168 each coordinate NADP(+).

This sequence belongs to the NAD(P)-dependent epimerase/dehydratase family. Dihydroflavonol-4-reductase subfamily.

It carries out the reaction a (2R,3S,4S)-leucoanthocyanidin + NADP(+) = a (2R,3R)-dihydroflavonol + NADPH + H(+). It catalyses the reaction (2S)-flavan-4-ol + NADP(+) = (2S)-flavanone + NADPH + H(+). Its pathway is pigment biosynthesis; anthocyanin biosynthesis. Functionally, bifunctional enzyme involved in flavonoid metabolism. The polypeptide is Dihydroflavonol 4-reductase (A1) (Zea mays (Maize)).